Consider the following 802-residue polypeptide: Phenylalanine--tRNA ligase beta subunit (802 aa).

The region spanning 38–148 (SKNFERVIVG…SEVPVGTDIS (111 aa)) is the tRNA-binding domain. One can recognise a B5 domain in the interval 403–478 (VIQKKIFVLK…RVFGYHNIPA (76 aa)). Mg(2+)-binding residues include aspartate 456, aspartate 462, and aspartate 466. Residues 703 to 796 (SLYPRCSRDI…LQEKFNAILR (94 aa)) form the FDX-ACB domain.

Belongs to the phenylalanyl-tRNA synthetase beta subunit family. Type 1 subfamily. As to quaternary structure, tetramer of two alpha and two beta subunits. The cofactor is Mg(2+).

The protein localises to the cytoplasm. It catalyses the reaction tRNA(Phe) + L-phenylalanine + ATP = L-phenylalanyl-tRNA(Phe) + AMP + diphosphate + H(+). The protein is Phenylalanine--tRNA ligase beta subunit of Buchnera aphidicola subsp. Baizongia pistaciae (strain Bp).